A 356-amino-acid chain; its full sequence is Vesicular integral-membrane protein VIP36 (356 aa).

The N-terminal stretch at 1–44 (MAAEGWIWRWGWGRRCLGRPGLPGPGPGPATPLFLLLLLGPVVA) is a signal peptide. Residues 45–322 (DITDGNSEHL…FRSGPLTGWR (278 aa)) lie on the Lumenal side of the membrane. The region spanning 52-276 (EHLKREHSLI…DIISMKLFQL (225 aa)) is the L-type lectin-like domain. The a carbohydrate site is built by Ser-96 and Asp-131. Asp-162, Tyr-164, and Asn-166 together coordinate Ca(2+). 164-166 (YPN) is an a carbohydrate binding site. Residue Asn-183 is glycosylated (N-linked (GlcNAc...) asparagine). Residue His-190 participates in a carbohydrate binding. Residue Asp-193 coordinates Ca(2+). An intrachain disulfide couples Cys-202 to Cys-239. Residue 260–262 (GDL) participates in a carbohydrate binding. Residues 323 to 345 (VFLLLLCALLGIIVCAVVGAVVF) form a helical membrane-spanning segment. Over 346–356 (QKRQERNKRFY) the chain is Cytoplasmic.

In terms of assembly, monomer. Requires Ca(2+) as cofactor. In terms of tissue distribution, expressed in kidney, liver, intestine, lung, spleen and heart. Low expression in brain.

It localises to the golgi apparatus membrane. Its function is as follows. Plays a role as an intracellular lectin in the early secretory pathway. Interacts with N-acetyl-D-galactosamine and high-mannose type glycans and may also bind to O-linked glycans. Involved in the transport and sorting of glycoproteins carrying high mannose-type glycans. The polypeptide is Vesicular integral-membrane protein VIP36 (LMAN2) (Canis lupus familiaris (Dog)).